A 443-amino-acid polypeptide reads, in one-letter code: Tubulin beta chain (443 aa).

Residues Gln11, Glu69, Ser138, Gly142, Thr143, Gly144, Asn204, and Asn226 each contribute to the GTP site. Glu69 is a Mg(2+) binding site. Positions 424 to 443 (QYQDASAEEEGEFEGEEEEA) are disordered. Positions 429–443 (SAEEEGEFEGEEEEA) are enriched in acidic residues.

This sequence belongs to the tubulin family. In terms of assembly, dimer of alpha and beta chains. A typical microtubule is a hollow water-filled tube with an outer diameter of 25 nm and an inner diameter of 15 nM. Alpha-beta heterodimers associate head-to-tail to form protofilaments running lengthwise along the microtubule wall with the beta-tubulin subunit facing the microtubule plus end conferring a structural polarity. Microtubules usually have 13 protofilaments but different protofilament numbers can be found in some organisms and specialized cells. It depends on Mg(2+) as a cofactor.

Its subcellular location is the cytoplasm. The protein resides in the cytoskeleton. Tubulin is the major constituent of microtubules, a cylinder consisting of laterally associated linear protofilaments composed of alpha- and beta-tubulin heterodimers. Microtubules grow by the addition of GTP-tubulin dimers to the microtubule end, where a stabilizing cap forms. Below the cap, tubulin dimers are in GDP-bound state, owing to GTPase activity of alpha-tubulin. The sequence is that of Tubulin beta chain (TUBB) from Chlamydomonas incerta.